We begin with the raw amino-acid sequence, 462 residues long: Juvenile hormone epoxide hydrolase (462 aa).

Residues 4–24 (ILSSFVAGVAIGSGLVITYVL) traverse the membrane as a helical segment. Aspartate 227 serves as the catalytic Nucleophile. Tyrosine 372 serves as the catalytic Proton donor. Histidine 428 (proton acceptor) is an active-site residue.

It belongs to the peptidase S33 family.

The protein resides in the microsome membrane. It localises to the endoplasmic reticulum membrane. It catalyses the reaction cis-stilbene oxide + H2O = (1R,2R)-hydrobenzoin. It carries out the reaction 1-(4-methoxyphenyl)-N-methyl-N-[(3-methyloxetan-3-yl)methyl]methanamine + H2O = 2-{[(4-methoxybenzyl)(methyl)amino]methyl}-2-methylpropane-1,3-diol. Its function is as follows. Catalyzes juvenile hormone hydrolysis. The sequence is that of Juvenile hormone epoxide hydrolase from Manduca sexta (Tobacco hawkmoth).